Here is a 252-residue protein sequence, read N- to C-terminus: Ureidoacrylate amidohydrolase RutB (252 aa).

A compositionally biased stretch (polar residues) spans 1–14 (MSTPARNTTLTSNT). Residues 1–31 (MSTPARNTTLTSNTPAGAPRLPGAPAPQVLP) form a disordered region. Low complexity predominate over residues 15–27 (PAGAPRLPGAPAP). D50 (proton acceptor) is an active-site residue. K159 is an active-site residue. Residue C192 is the Nucleophile of the active site.

This sequence belongs to the isochorismatase family. RutB subfamily.

It carries out the reaction (Z)-3-ureidoacrylate + H2O + H(+) = (Z)-3-aminoacrylate + NH4(+) + CO2. It catalyses the reaction (Z)-3-ureidoacrylate + H2O = (Z)-3-aminoacrylate + carbamate + H(+). The catalysed reaction is (Z)-2-methylureidoacrylate + H2O + H(+) = (Z)-2-methylaminoacrylate + NH4(+) + CO2. In terms of biological role, hydrolyzes ureidoacrylate to form aminoacrylate and carbamate. The carbamate hydrolyzes spontaneously, thereby releasing one of the nitrogen atoms of the pyrimidine ring as ammonia and one of its carbon atoms as CO2. This Variovorax paradoxus (strain S110) protein is Ureidoacrylate amidohydrolase RutB.